Reading from the N-terminus, the 182-residue chain is Troponin I, fast skeletal muscle (182 aa).

Glycine 2 bears the N-acetylglycine mark. The segment at 2-48 (GDEEKRNRAITARRQHLKSVMLQIAATELEKEEGRREAEKQNYLAEH) is involved in binding TNC. The residue at position 12 (threonine 12) is a Phosphothreonine; by PHK. The interval 97–117 (NQKLFDLRGKFKRPPLRRVRM) is involved in binding TNC and actin. Phosphoserine; by PKA is present on serine 118.

Belongs to the troponin I family. Binds to actin and tropomyosin.

Its function is as follows. Troponin I is the inhibitory subunit of troponin, the thin filament regulatory complex which confers calcium-sensitivity to striated muscle actomyosin ATPase activity. The sequence is that of Troponin I, fast skeletal muscle (TNNI2) from Oryctolagus cuniculus (Rabbit).